Here is a 665-residue protein sequence, read N- to C-terminus: METPSQRRATRSGAQASSTPLSPTRITRLQEKEDLQELNDRLAVYIDRVRSLETENAGLRLRITESEEVVSREVSGIKAAYEAELGDARKTLDSVAKERARLQLELSKVREEFKELKARNTKKEGDLLAAQARLKDLEALLNSKEAALSTALSEKRTLEGELHDLRGQVAKLEAALGEAKKQLQDEMLRRVDAENRLQTLKEELDFQKNIYSEELRETKRRHETRLVEIDNGKQREFESRLADALQELRAQHEDQVEQYKKELEKTYSAKLDNARQSAERNSNLVGAAHEELQQSRIRIDSLSAQLSQLQKQLAAKEAKLRDLEDSLARERDTSRRLLAEKEREMAEMRARMQQQLDEYQELLDIKLALDMEIHAYRKLLEGEEERLRLSPSPTSQRSRGRASSHSSQSQGGGSVTKKRKLESSESRSSFSQHARTSGRVAVEEVDEEGKFVRLRNKSNEDQSMGNWQIRRQNGDDPLMTYRFPPKFTLKAGQVVTIWASGAGATHSPPTDLVWKAQNTWGCGSSLRTALINSTGEEVAMRKLVRSLTMVEDNEDDDEDGEELLHHHRGSHCSGSGDPAEYNLRSRTVLCGTCGQPADKAAGGAGAQVGGSISSGSSASSVTVTRSFRSVGGSGGGSFGDNLVTRSYLLGNSSPRSQSSQNCSIM.

Residue M1 is modified to N-acetylmethionine. A disordered region spans residues 1-25; it reads METPSQRRATRSGAQASSTPLSPTR. The interval 1 to 33 is head; sequence METPSQRRATRSGAQASSTPLSPTRITRLQEKE. Residues 1 to 130 form an interaction with MLIP region; sequence METPSQRRAT…TKKEGDLLAA (130 aa). Phosphothreonine is present on T3. S5 is subject to Phosphoserine. T10 is modified (phosphothreonine). 2 positions are modified to phosphoserine: S12 and S18. T19 is modified (phosphothreonine). At S22 the chain carries Phosphoserine. The 357-residue stretch at 31 to 387 folds into the IF rod domain; it reads EKEDLQELND…KLLEGEEERL (357 aa). The residue at position 32 (K32) is an N6-acetyllysine; alternate. An N6-succinyllysine; alternate modification is found at K32. A Glycyl lysine isopeptide (Lys-Gly) (interchain with G-Cter in SUMO2); alternate cross-link involves residue K32. A coil 1A region spans residues 34–70; sequence DLQELNDRLAVYIDRVRSLETENAGLRLRITESEEVV. Residues S51, S66, and S71 each carry the phosphoserine modification. Positions 71-80 are linker 1; the sequence is SREVSGIKAA. K78 and K97 each carry N6-acetyllysine. The coil 1B stretch occupies residues 81 to 218; it reads YEAELGDARK…NIYSEELRET (138 aa). K97 participates in a covalent cross-link: Glycyl lysine isopeptide (Lys-Gly) (interchain with G-Cter in SUMO2). S107 is subject to Phosphoserine. Residues K108, K114, K123, K135, K144, and K155 each carry the N6-acetyllysine modification. K171 is subject to N6-acetyllysine; alternate. K171 is modified (N6-succinyllysine; alternate). A Glycyl lysine isopeptide (Lys-Gly) (interchain with G-Cter in SUMO2); alternate cross-link involves residue K171. Residues K180, K201, and K208 each carry the N6-acetyllysine modification. K201 participates in a covalent cross-link: Glycyl lysine isopeptide (Lys-Gly) (interchain with G-Cter in SUMO2); alternate. K201 participates in a covalent cross-link: Glycyl lysine isopeptide (Lys-Gly) (interchain with G-Cter in SUMO); alternate. A Glycyl lysine isopeptide (Lys-Gly) (interchain with G-Cter in SUMO2) cross-link involves residue K208. S212 bears the Phosphoserine mark. Glycyl lysine isopeptide (Lys-Gly) (interchain with G-Cter in SUMO2) cross-links involve residues K219 and K233. Residues 219 to 242 are linker 2; it reads KRRHETRLVEIDNGKQREFESRLA. An N6-acetyllysine mark is found at K233, K260, K265, and K270. Residues 243–383 are coil 2; sequence DALQELRAQH…HAYRKLLEGE (141 aa). K260 is covalently cross-linked (Glycyl lysine isopeptide (Lys-Gly) (interchain with G-Cter in SUMO2); alternate). K270 participates in a covalent cross-link: Glycyl lysine isopeptide (Lys-Gly) (interchain with G-Cter in SUMO2); alternate. Phosphoserine occurs at positions 277, 282, 301, and 307. K311 participates in a covalent cross-link: Glycyl lysine isopeptide (Lys-Gly) (interchain with G-Cter in SUMO2); alternate. Residues K311, K316, and K341 each carry the N6-acetyllysine modification. Residues K366 and K378 each participate in a glycyl lysine isopeptide (Lys-Gly) (interchain with G-Cter in SUMO2) cross-link. The tract at residues 384 to 442 is disordered; it reads EERLRLSPSPTSQRSRGRASSHSSQSQGGGSVTKKRKLESSESRSSFSQHARTSGRVAV. The tract at residues 384–665 is tail; sequence EERLRLSPSP…SQSSQNCSIM (282 aa). Phosphoserine occurs at positions 390, 392, 395, 398, 403, 404, 406, 407, 409, and 414. S392 is modified (phosphoserine; by CDK1). Over residues 395–409 the composition is skewed to low complexity; the sequence is SQRSRGRASSHSSQS. T416 bears the Phosphothreonine mark. 2 positions are modified to N6-acetyllysine: K417 and K420. Glycyl lysine isopeptide (Lys-Gly) (interchain with G-Cter in SUMO2) cross-links involve residues K417 and K420. The short motif at 417–422 is the Nuclear localization signal element; that stretch reads KKRKLE. Phosphoserine is present on residues S423, S426, S429, and S431. One can recognise an LTD domain in the interval 428-545; it reads SSFSQHARTS…EEVAMRKLVR (118 aa). A Glycyl lysine isopeptide (Lys-Gly) (interchain with G-Cter in SUMO2); alternate cross-link involves residue K450. N6-acetyllysine is present on residues K450 and K457. A phosphoserine mark is found at S458, E460, and S463. K486 bears the N6-acetyllysine mark. K486 is covalently cross-linked (Glycyl lysine isopeptide (Lys-Gly) (interchain with G-Cter in SUMO2)). Residue T496 is modified to Phosphothreonine. Phosphoserine is present on S500. 2 positions are modified to phosphothreonine: T505 and T510. Residues S533 and S546 each carry the phosphoserine modification. A Phosphothreonine modification is found at T548. The interval 553 to 577 is disordered; the sequence is NEDDDEDGEELLHHHRGSHCSGSGD. Phosphoserine is present on residues S570, C572, and S573. K599 is covalently cross-linked (Glycyl lysine isopeptide (Lys-Gly) (interchain with G-Cter in SUMO2); alternate). K599 participates in a covalent cross-link: Glycyl lysine isopeptide (Lys-Gly) (interchain with G-Cter in SUMO1); alternate. A phosphoserine mark is found at S613, S614, S617, and S620. Residues S626 and S629 are each glycosylated (O-linked (GlcNAc) serine). Phosphoserine occurs at positions 629, 633, 637, and 653. Residues 648–662 constitute a propeptide, removed in Lamin-A/C form; it reads LLGNSSPRSQSSQNC. At C662 the chain carries Cysteine methyl ester. A lipid anchor (S-farnesyl cysteine) is attached at C662. The propeptide at 663-665 is removed in Prelamin-A/C form and in Lamin-A/C form; the sequence is SIM.

The protein belongs to the intermediate filament family. Homodimer of lamin A and lamin C. Lamin dimers then assemble into dimeric head-to-tail polymers. Ultimately, two head-to-tail polymers assemble laterally into a protofilament with a uniformly shaped rod of 3.5 nm in diameter. Interacts with lamin-associated polypeptides IA, IB and TMPO-alpha, RB1 and with emerin. Proteolytically processed isoform A interacts with NARF. Interacts with SREBF1, SREBF2, SUN1, SUN2 and TMEM43. Interacts with TMEM201. Prelamin-A/C interacts with EMD. Interacts with DMPK; may regulate nuclear envelope stability. Interacts with MLIP. Interacts with SUV39H1; the interaction increases stability of SUV39H1. Interacts with ITSN1 isoform 2. Interacts with IFFO1; the interaction forms an interior nucleoskeleton and the recruitment to DNA double-strand breaks. As to quaternary structure, interacts with EMD. In terms of assembly, interacts (via C-terminus) with LEMD2 (via N-terminus) (in vitro). Post-translationally, proteolytic cleavage of the C-terminal of 18 residues of prelamin-A/C results in the production of lamin-A/C. The prelamin-A/C maturation pathway includes farnesylation of CAAX motif by protein farnesyltransferase (FNTA and FNTB), removal of the last three amino acids (-AAX) by RCE1/FACE2 and/or ZMPSTE24, methylation of the C-terminal cysteine by ICMT and endoproteolytic removal of the last 15 C-terminal amino acids by ZMPSTE24. Proteolytic cleavage requires prior farnesylation and methylation, and absence of these blocks cleavage. In terms of processing, farnesylation of prelamin-A/C facilitates nuclear envelope targeting. Phosphorylation plays a key role in lamin organization, subcellular localization and nuclear envelope disintegration. Phosphorylation by CDK1 at Ser-22 and Ser-392 at the onset of mitosis drives lamin disassembly and nuclear envelope breakdown. Phosphorylation at Ser-22 and Ser-392 during interphase promotes localization to the nucleoplasm and regulates lamina assembly. Phosphorylation at Ser-22, Ser-392 and Ser-629 during interphase causes redistribution between the nucleus and the cytoplasm. Phosphorylation at Ser-22 by CDK1 regulates matrix stiffness. Phosphorylation status of Ser-22 determines its localization between double-strand break (DSB) sites and the nuclear matrix. Phosphorylated by ATR at Ser-282 in response to DNA damage, leading to lamin disassembly and nuclear envelope rupture. Phosphorylation also regulates stability in micronuclei arising from genome instability: phosphorylation at Ser-395 by ATR in response to genome instability and double-stranded DNA breaks primes LMNA for subsequent phosphorylation at Ser-392 by CDK1 and micronuclei envelope rupture. The rupture of micronuclear envelope triggers the cGAS-STING pathway thereby activating the type I interferon response and innate immunity. Post-translationally, isoform C is phosphorylated on Ser-392, Ser-407 and Ser-409 at interphase. In terms of processing, acetylation by KAT8 is required for nuclear architecture. Sumoylation is necessary for the localization to the nuclear envelope. Post-translationally, the N-terminus is blocked. Expressed in liver and in bone marrow (at protein level). Expressed in cardiomyocytes. In terms of tissue distribution, specifically expressed in germ cells.

It localises to the nucleus lamina. It is found in the nucleus envelope. Its subcellular location is the nucleus. The protein localises to the nucleoplasm. The protein resides in the nucleus matrix. Its function is as follows. Lamins are intermediate filament proteins that assemble into a filamentous meshwork, and which constitute the major components of the nuclear lamina, a fibrous layer on the nucleoplasmic side of the inner nuclear membrane. Lamins provide a framework for the nuclear envelope, bridging the nuclear envelope and chromatin, thereby playing an important role in nuclear assembly, chromatin organization, nuclear membrane and telomere dynamics. Lamin A and C also regulate matrix stiffness by conferring nuclear mechanical properties. The structural integrity of the lamina is strictly controlled by the cell cycle, as seen by the disintegration and formation of the nuclear envelope in prophase and telophase, respectively. Lamin A and C are present in equal amounts in the lamina of mammals. Also invoved in DNA repair: recruited by DNA repair proteins XRCC4 and IFFO1 to the DNA double-strand breaks (DSBs) to prevent chromosome translocation by immobilizing broken DNA ends. Required for normal development of peripheral nervous system and skeletal muscle and for muscle satellite cell proliferation. Required for osteoblastogenesis and bone formation. Also prevents fat infiltration of muscle and bone marrow, helping to maintain the volume and strength of skeletal muscle and bone. Required for cardiac homeostasis. Functionally, prelamin-A/C can accelerate smooth muscle cell senescence. It acts to disrupt mitosis and induce DNA damage in vascular smooth muscle cells (VSMCs), leading to mitotic failure, genomic instability, and premature senescence. Isoform C2 may have a role in determining the organization of nuclear and chromosomal structures during spermatogenesis. The protein is Prelamin-A/C (Lmna) of Mus musculus (Mouse).